We begin with the raw amino-acid sequence, 332 residues long: Holliday junction branch migration complex subunit RuvB (332 aa).

The large ATPase domain (RuvB-L) stretch occupies residues 1 to 181 (MSRILDNEIM…FGITGHMEYY (181 aa)). Residues leucine 20, arginine 21, glycine 62, lysine 65, threonine 66, threonine 67, 128–130 (EDF), arginine 171, tyrosine 181, and arginine 218 each bind ATP. Threonine 66 serves as a coordination point for Mg(2+). The segment at 182-252 (AHAGLTEIVE…ITDKALTMLD (71 aa)) is small ATPAse domain (RuvB-S). The head domain (RuvB-H) stretch occupies residues 255-332 (HEGLDYVDQK…EHLGYEYSEK (78 aa)). Residues arginine 291, arginine 310, arginine 312, and arginine 315 each contribute to the DNA site.

Belongs to the RuvB family. As to quaternary structure, homohexamer. Forms an RuvA(8)-RuvB(12)-Holliday junction (HJ) complex. HJ DNA is sandwiched between 2 RuvA tetramers; dsDNA enters through RuvA and exits via RuvB. An RuvB hexamer assembles on each DNA strand where it exits the tetramer. Each RuvB hexamer is contacted by two RuvA subunits (via domain III) on 2 adjacent RuvB subunits; this complex drives branch migration. In the full resolvosome a probable DNA-RuvA(4)-RuvB(12)-RuvC(2) complex forms which resolves the HJ.

It localises to the cytoplasm. It catalyses the reaction ATP + H2O = ADP + phosphate + H(+). The RuvA-RuvB-RuvC complex processes Holliday junction (HJ) DNA during genetic recombination and DNA repair, while the RuvA-RuvB complex plays an important role in the rescue of blocked DNA replication forks via replication fork reversal (RFR). RuvA specifically binds to HJ cruciform DNA, conferring on it an open structure. The RuvB hexamer acts as an ATP-dependent pump, pulling dsDNA into and through the RuvAB complex. RuvB forms 2 homohexamers on either side of HJ DNA bound by 1 or 2 RuvA tetramers; 4 subunits per hexamer contact DNA at a time. Coordinated motions by a converter formed by DNA-disengaged RuvB subunits stimulates ATP hydrolysis and nucleotide exchange. Immobilization of the converter enables RuvB to convert the ATP-contained energy into a lever motion, pulling 2 nucleotides of DNA out of the RuvA tetramer per ATP hydrolyzed, thus driving DNA branch migration. The RuvB motors rotate together with the DNA substrate, which together with the progressing nucleotide cycle form the mechanistic basis for DNA recombination by continuous HJ branch migration. Branch migration allows RuvC to scan DNA until it finds its consensus sequence, where it cleaves and resolves cruciform DNA. In Streptococcus pneumoniae (strain JJA), this protein is Holliday junction branch migration complex subunit RuvB.